The chain runs to 204 residues: Outer-membrane lipoprotein carrier protein (204 aa).

Residues 1 to 21 (MKKYLNLTALLLVGISNVTWA) form the signal peptide.

This sequence belongs to the LolA family. Monomer.

It localises to the periplasm. In terms of biological role, participates in the translocation of lipoproteins from the inner membrane to the outer membrane. Only forms a complex with a lipoprotein if the residue after the N-terminal Cys is not an aspartate (The Asp acts as a targeting signal to indicate that the lipoprotein should stay in the inner membrane). The chain is Outer-membrane lipoprotein carrier protein from Histophilus somni (strain 2336) (Haemophilus somnus).